A 138-amino-acid chain; its full sequence is ATP synthase epsilon chain, chloroplastic (138 aa).

The protein belongs to the ATPase epsilon chain family. F-type ATPases have 2 components, CF(1) - the catalytic core - and CF(0) - the membrane proton channel. CF(1) has five subunits: alpha(3), beta(3), gamma(1), delta(1), epsilon(1). CF(0) has three main subunits: a, b and c.

It localises to the plastid. The protein resides in the chloroplast thylakoid membrane. Produces ATP from ADP in the presence of a proton gradient across the membrane. This Galdieria sulphuraria (Red alga) protein is ATP synthase epsilon chain, chloroplastic.